The sequence spans 386 residues: Epoxyqueuosine reductase (386 aa).

Residues arginine 57, cysteine 97, aspartate 134, 139-141, serine 152, asparagine 155, isoleucine 158, and leucine 169 contribute to the cob(II)alamin site; that span reads SDR. The Proton donor role is filled by aspartate 134. The 4Fe-4S ferredoxin-type domain maps to 178 to 208; that stretch reads FEPDVPIEDMCGSCTKCLDACPTGALVNPGQ. Residues cysteine 188, cysteine 191, cysteine 194, cysteine 198, and cysteine 214 each coordinate [4Fe-4S] cluster. Serine 216 contributes to the cob(II)alamin binding site. TRNA contacts are provided by glutamine 220 and lysine 222. 3 residues coordinate [4Fe-4S] cluster: cysteine 240, cysteine 243, and cysteine 247. Residue 240-241 participates in cob(II)alamin binding; it reads CD. The tRNA site is built by asparagine 280, arginine 281, arginine 295, lysine 297, and lysine 298. The HEAT-like PBS-type repeat unit spans residues 333–357; sequence RGTAAWAIGKIGDPAYAEELEKALE.

This sequence belongs to the QueG family. Monomer. Cob(II)alamin is required as a cofactor. The cofactor is [4Fe-4S] cluster.

The protein resides in the cytoplasm. The catalysed reaction is epoxyqueuosine(34) in tRNA + AH2 = queuosine(34) in tRNA + A + H2O. It participates in tRNA modification; tRNA-queuosine biosynthesis. Catalyzes the conversion of epoxyqueuosine (oQ) to queuosine (Q), which is a hypermodified base found in the wobble positions of tRNA(Asp), tRNA(Asn), tRNA(His) and tRNA(Tyr). The chain is Epoxyqueuosine reductase from Bacillus subtilis (strain 168).